Here is a 622-residue protein sequence, read N- to C-terminus: 1-deoxy-D-xylulose-5-phosphate synthase (622 aa).

Residues His-80 and 121–123 each bind thiamine diphosphate; that span reads GHS. Asp-152 contacts Mg(2+). Residues 153–154, Asn-181, Tyr-288, and Glu-370 contribute to the thiamine diphosphate site; that span reads GA. Residue Asn-181 participates in Mg(2+) binding.

This sequence belongs to the transketolase family. DXPS subfamily. In terms of assembly, homodimer. Mg(2+) serves as cofactor. Thiamine diphosphate is required as a cofactor.

It carries out the reaction D-glyceraldehyde 3-phosphate + pyruvate + H(+) = 1-deoxy-D-xylulose 5-phosphate + CO2. It functions in the pathway metabolic intermediate biosynthesis; 1-deoxy-D-xylulose 5-phosphate biosynthesis; 1-deoxy-D-xylulose 5-phosphate from D-glyceraldehyde 3-phosphate and pyruvate: step 1/1. Catalyzes the acyloin condensation reaction between C atoms 2 and 3 of pyruvate and glyceraldehyde 3-phosphate to yield 1-deoxy-D-xylulose-5-phosphate (DXP). The protein is 1-deoxy-D-xylulose-5-phosphate synthase of Shewanella oneidensis (strain ATCC 700550 / JCM 31522 / CIP 106686 / LMG 19005 / NCIMB 14063 / MR-1).